Here is a 297-residue protein sequence, read N- to C-terminus: uncharacterized protein (297 aa).

A disordered region spans residues 46–229 (LGAGGPPPPP…RPPPYIAPPP (184 aa)). Residues 65–81 (PEGPGGPPQHAPPNPPP) show a composition bias toward pro residues. Gly residues predominate over residues 90-100 (RGGGAGGAGDG). Residues 106 to 117 (DAAEEYGPEDLD) show a composition bias toward acidic residues. Basic residues predominate over residues 137–151 (HQTRGPGRRAKKRLR). Residues 184 to 201 (ATPQAAPAAKTTPASPQT) are compositionally biased toward low complexity. Residues 219–229 (HRPPPYIAPPP) show a composition bias toward pro residues.

This is an uncharacterized protein from Torque teno virus (isolate Human/China/CT23F/2001) (TTV).